Reading from the N-terminus, the 606-residue chain is Pickpocket protein 28 (606 aa).

Residues 1-26 (MRTLTESRRRQSGSSGCKKDSESDDD) are disordered. A run of 2 helical transmembrane segments spans residues 66–86 (IFFGLAFVLVVILSVFFISNV) and 490–510 (GLLGLFMGFSIFSVIEIFFYI).

The protein belongs to the amiloride-sensitive sodium channel (TC 1.A.6) family. Expressed in water-sensing neurons in taste bristles on the proboscis but not in carbonation-sensing taste peg neurons (at protein level). Expressed in the tracheal system.

The protein localises to the cell membrane. Osmosensitive ion channel that mediates the cellular and behavioral response to water. Plays an essential role in gustatory water reception. Part of a complex that plays a role in tracheal liquid clearance. Probable role in sodium transport. This Drosophila melanogaster (Fruit fly) protein is Pickpocket protein 28 (ppk28).